The primary structure comprises 113 residues: UPF0342 protein spyM18_0873 (113 aa).

Belongs to the UPF0342 family.

This chain is UPF0342 protein spyM18_0873, found in Streptococcus pyogenes serotype M18 (strain MGAS8232).